A 77-amino-acid chain; its full sequence is Sec-independent protein translocase protein TatA (77 aa).

The chain crosses the membrane as a helical span at residues 1–21 (MGSFSIWHWLVVGILVLLLFG). Residues 41–77 (KGMSEDDAPTPAPKQIDAQRAPDLSATPTPTAETENR) form a disordered region. Residues 66–77 (ATPTPTAETENR) show a composition bias toward polar residues.

The protein belongs to the TatA/E family. In terms of assembly, the Tat system comprises two distinct complexes: a TatABC complex, containing multiple copies of TatA, TatB and TatC subunits, and a separate TatA complex, containing only TatA subunits. Substrates initially bind to the TatABC complex, which probably triggers association of the separate TatA complex to form the active translocon.

Its subcellular location is the cell inner membrane. Part of the twin-arginine translocation (Tat) system that transports large folded proteins containing a characteristic twin-arginine motif in their signal peptide across membranes. TatA could form the protein-conducting channel of the Tat system. The sequence is that of Sec-independent protein translocase protein TatA from Sphingopyxis alaskensis (strain DSM 13593 / LMG 18877 / RB2256) (Sphingomonas alaskensis).